Consider the following 444-residue polypeptide: Protein CPn_0808/CP_1063/CPj0808/CpB0837 (444 aa).

Over residues 1 to 13 (MTSGVSGSSSQDP) the composition is skewed to polar residues. Residues 1–124 (MTSGVSGSSS…NNYDSPSLPT (124 aa)) form a disordered region. Over residues 15-24 (LAAQLAQSSQ) the composition is skewed to low complexity. Polar residues predominate over residues 25-42 (KAGNAQSGHDTKNVTKQG). A compositionally biased stretch (basic and acidic residues) spans 77–86 (SKGEKSEKSG). A compositionally biased stretch (low complexity) spans 88–103 (SKSSTSVASASETATA). A compositionally biased stretch (polar residues) spans 113–124 (RQNNYDSPSLPT).

This sequence belongs to the chlamydial CPn_0808/CT_579/TC_0868 family.

This chain is Protein CPn_0808/CP_1063/CPj0808/CpB0837, found in Chlamydia pneumoniae (Chlamydophila pneumoniae).